Consider the following 159-residue polypeptide: Lipoprotein signal peptidase (159 aa).

2 helical membrane passes run 59 to 79 (PMIL…YVVF) and 87 to 107 (FLIT…DRIL). Catalysis depends on residues Asp-113 and Asp-139. Residues 131-151 (LWPVFNIADSAITIGACVLVI) traverse the membrane as a helical segment.

Belongs to the peptidase A8 family.

It is found in the cell inner membrane. It carries out the reaction Release of signal peptides from bacterial membrane prolipoproteins. Hydrolyzes -Xaa-Yaa-Zaa-|-(S,diacylglyceryl)Cys-, in which Xaa is hydrophobic (preferably Leu), and Yaa (Ala or Ser) and Zaa (Gly or Ala) have small, neutral side chains.. It functions in the pathway protein modification; lipoprotein biosynthesis (signal peptide cleavage). Functionally, this protein specifically catalyzes the removal of signal peptides from prolipoproteins. The sequence is that of Lipoprotein signal peptidase from Chlorobium phaeobacteroides (strain BS1).